Consider the following 394-residue polypeptide: MTPAADPGQGILSRMTETTIGIGGAAESTDMVLNIGPQHPSTHGVLRLRIVLDGERVQHAEPVIGYMHRGAEKLFEARDYRQIIMLANRHDWLSAFSNELGVVMAVERMLGMEVPERAVWTRTLLAELNRVLNHLMFLGSYPLELGGITPVFHAFREREELQAVMEEVSGGRMHYMFNRVGGLKEDVPAGWAGRVRDAVASVRSRMDVYENLVLGNEIFRGRTRDVGVLSAAAVHAYGVSGPIARASGVDFDLRRDEPYLAYGELRDTLKVVTRTEGDCLARFECLLEQTLNSLDLADACLDRMAHLAPGPINQRLPKVLKAPEGHTYAWTENPLGVNGYYLVSKGEKTPYRLKLRSASFNNIQALTELLPGTLVADMVAILGSLFFVVGDIDK.

It belongs to the complex I 49 kDa subunit family. In terms of assembly, NDH-1 is composed of 14 different subunits. Subunits NuoB, C, D, E, F, and G constitute the peripheral sector of the complex.

It localises to the cell membrane. The catalysed reaction is a quinone + NADH + 5 H(+)(in) = a quinol + NAD(+) + 4 H(+)(out). Functionally, NDH-1 shuttles electrons from NADH, via FMN and iron-sulfur (Fe-S) centers, to quinones in the respiratory chain. The immediate electron acceptor for the enzyme in this species is believed to be a menaquinone. Couples the redox reaction to proton translocation (for every two electrons transferred, four hydrogen ions are translocated across the cytoplasmic membrane), and thus conserves the redox energy in a proton gradient. In Streptomyces griseus subsp. griseus (strain JCM 4626 / CBS 651.72 / NBRC 13350 / KCC S-0626 / ISP 5235), this protein is NADH-quinone oxidoreductase subunit D 2.